A 58-amino-acid chain; its full sequence is Apelin receptor early endogenous ligand (58 aa).

An N-terminal signal peptide occupies residues 1 to 22 (MRFFHPLYLLLLLLTVLVLISA).

It belongs to the Elabela/Toddler family. Interacts with aplnra and aplnrb. Expressed ubiquitously during late blastula and gastrula stages and becomes restricted to the lateral mesoderm, endoderm, and anterior and posterior notochord after gastrulation.

It is found in the secreted. The protein resides in the extracellular space. Functionally, peptide hormone that functions as endogenous ligand for the G-protein-coupled apelin receptor (aplnra and/or aplnrb), that plays a role in the regulation of normal cardiovascular function and fluid homeostasis. Functions as a balanced agonist activating both G(i) protein pathway and beta-arrestin pathway of APLNR. Downstream G proteins activation, apelin can inhibit cAMP production and activate key intracellular effectors such as ERKs. On the other hand, APLNR activation induces beta-arrestin recruitment to the membrane leading to desensitization and internalization of the receptor. Required for mesendodermal differentiation, blood vessels formation and heart morphogenesis during early development and for adult cardiovascular homeostasis. Acts as a motogen by promoting mesendodermal cell migration during gastrulation by binding and activating the apelin receptor. Acts as an early embryonic regulator of cellular movement with a role in migration and development of cardiac progenitor cells. May act as a chemoattractant for the activation of angioblast migration toward the embryonic midline, i.e. the position of the future vessel formation, during vasculogenesis. Positively regulates sinus venosus (SV)-derived endothelial cells migration into the developing heart to promote coronary blood vessel sprouting. Involved in cardioprotective functions during heart failure. Mediates myocardial contractility in an ERK1/2-dependent manner. In Danio rerio (Zebrafish), this protein is Apelin receptor early endogenous ligand.